The chain runs to 125 residues: MKIGNDSNKEVKIFVKNIHMSAYKLRRVVNQIRGHSYGEAVMILEFMPYRACYPVLKLVSNAAENANHKMGLRKADLFVSEVKVDAGSFAKRLRLRAQGRNYPIHKPTCHITIILKKKSVYKEEL.

It belongs to the universal ribosomal protein uL22 family. Part of the 50S ribosomal subunit.

It localises to the plastid. Its subcellular location is the chloroplast. Its function is as follows. This protein binds specifically to 23S rRNA. In terms of biological role, the globular domain of the protein is located near the polypeptide exit tunnel on the outside of the subunit, while an extended beta-hairpin is found that lines the wall of the exit tunnel in the center of the 70S ribosome. This is Large ribosomal subunit protein uL22c (rpl22) from Huperzia lucidula (Shining clubmoss).